We begin with the raw amino-acid sequence, 876 residues long: Valine--tRNA ligase (876 aa).

The 'HIGH' region motif lies at 44–54; it reads PNVTGKLHLGH. Residues 520–524 carry the 'KMSKS' region motif; the sequence is KMSKS. Lys-523 contributes to the ATP binding site. Residues 805–876 adopt a coiled-coil conformation; the sequence is LEGLIDMDKE…VKSRIEQLKA (72 aa).

It belongs to the class-I aminoacyl-tRNA synthetase family. ValS type 1 subfamily. As to quaternary structure, monomer.

Its subcellular location is the cytoplasm. It carries out the reaction tRNA(Val) + L-valine + ATP = L-valyl-tRNA(Val) + AMP + diphosphate. Catalyzes the attachment of valine to tRNA(Val). As ValRS can inadvertently accommodate and process structurally similar amino acids such as threonine, to avoid such errors, it has a 'posttransfer' editing activity that hydrolyzes mischarged Thr-tRNA(Val) in a tRNA-dependent manner. In Staphylococcus epidermidis (strain ATCC 35984 / DSM 28319 / BCRC 17069 / CCUG 31568 / BM 3577 / RP62A), this protein is Valine--tRNA ligase.